The chain runs to 874 residues: Protein translocase subunit SecA (874 aa).

ATP-binding positions include Gln-85, 103-107 (GEGKT), and Asp-492. Over residues 839–854 (EEGPKKPYRREQKIGR) the composition is skewed to basic and acidic residues. The interval 839 to 864 (EEGPKKPYRREQKIGRNDPCPCGSGK) is disordered. Zn(2+) contacts are provided by Cys-858, Cys-860, Cys-869, and Cys-870.

It belongs to the SecA family. As to quaternary structure, monomer and homodimer. Part of the essential Sec protein translocation apparatus which comprises SecA, SecYEG and auxiliary proteins SecDF. Other proteins may also be involved. Requires Zn(2+) as cofactor.

Its subcellular location is the cell membrane. The protein localises to the cytoplasm. It carries out the reaction ATP + H2O + cellular proteinSide 1 = ADP + phosphate + cellular proteinSide 2.. In terms of biological role, part of the Sec protein translocase complex. Interacts with the SecYEG preprotein conducting channel. Has a central role in coupling the hydrolysis of ATP to the transfer of proteins into and across the cell membrane, serving as an ATP-driven molecular motor driving the stepwise translocation of polypeptide chains across the membrane. In Carboxydothermus hydrogenoformans (strain ATCC BAA-161 / DSM 6008 / Z-2901), this protein is Protein translocase subunit SecA.